A 545-amino-acid polypeptide reads, in one-letter code: MTELTQGKAWKTLEAHTQALPHMRALFEADTKRFDNMSTSACGLFLDYSKNRANKETMSLLFSVAEDAQLESKIKAMFNGEMINTTEKRAVLHTALRAKPEQEIMLNGVNIVQEVQETQQQMELFVDAVSSGNWKGYTGKKITDIVSIGIGGSFLGPKIVSQALRPYWSKQLNCHFVANVDASSIVEKLKPLNAETTLFIMSSKSFGTQETLTNTLSAKDWFIEQGGSQADVAKHFVAVTSNVEKATEFGIDADNIFPMWDWVGGRYSLWSAIGLPIALLVGMDNFRALLSGANEMDQHFANTPLSENMPVIMGLFSLLYGNFHDAQSHVVLTYDHYLRGLPAYFQQLDMESNGKSVTLDGTEVDHSTGPVIWGGEGTNGQHAYHQLLHQGTALIPADFIMPLQSHNPLGEHHVQLASNCFGQTQALMQGRSYEEALKELAGSKLPADEKSVIAKHKVMQGNKPSNTILMDKLTPTTLGALIALYEHRTFVQGAIWQINSFDQWGVELGKTLGNDVLDRLSAENDATELDCSSNGLINMFRQKKI.

Glutamate 351 serves as the catalytic Proton donor. Catalysis depends on residues histidine 382 and lysine 510.

Belongs to the GPI family.

The protein resides in the cytoplasm. It catalyses the reaction alpha-D-glucose 6-phosphate = beta-D-fructose 6-phosphate. It functions in the pathway carbohydrate biosynthesis; gluconeogenesis. It participates in carbohydrate degradation; glycolysis; D-glyceraldehyde 3-phosphate and glycerone phosphate from D-glucose: step 2/4. Catalyzes the reversible isomerization of glucose-6-phosphate to fructose-6-phosphate. This is Glucose-6-phosphate isomerase from Shewanella sediminis (strain HAW-EB3).